The chain runs to 265 residues: Ribosomal RNA large subunit methyltransferase E (265 aa).

5 residues coordinate S-adenosyl-L-methionine: Gly-83, Trp-85, Asp-106, Asp-122, and Asp-146. Lys-186 serves as the catalytic Proton acceptor. A disordered region spans residues 230 to 265; it reads KGREAGPPSGGSERPVDVSKDLSARSDSEGPGDAEG. Residues 243–257 show a composition bias toward basic and acidic residues; that stretch reads RPVDVSKDLSARSDS.

It belongs to the class I-like SAM-binding methyltransferase superfamily. RNA methyltransferase RlmE family.

The protein localises to the cytoplasm. It carries out the reaction uridine(2552) in 23S rRNA + S-adenosyl-L-methionine = 2'-O-methyluridine(2552) in 23S rRNA + S-adenosyl-L-homocysteine + H(+). Its function is as follows. Specifically methylates the uridine in position 2552 of 23S rRNA at the 2'-O position of the ribose in the fully assembled 50S ribosomal subunit. The sequence is that of Ribosomal RNA large subunit methyltransferase E from Mesorhizobium japonicum (strain LMG 29417 / CECT 9101 / MAFF 303099) (Mesorhizobium loti (strain MAFF 303099)).